The sequence spans 186 residues: Ribosome-recycling factor (186 aa).

The protein belongs to the RRF family.

Its subcellular location is the cytoplasm. In terms of biological role, responsible for the release of ribosomes from messenger RNA at the termination of protein biosynthesis. May increase the efficiency of translation by recycling ribosomes from one round of translation to another. The polypeptide is Ribosome-recycling factor (Chlorobium chlorochromatii (strain CaD3)).